The chain runs to 161 residues: MKYDTSELCDIYQEEVNVVEPLFSNFGGRSSFGGQIITVKCFEDNGLLYELLEENGRGRVLLVDGGGSVRRALIDAELARLAVQNEWEGLVVYGAVRQVDDLAELDVGIQALAAIPVGAAGEGIGESDVRVNFGGVTFFSGDHLYADNTGIILSEDPLDIE.

The protein belongs to the RraA family. In terms of assembly, homotrimer. Binds to both RNA-binding sites in the C-terminal region of Rne and to RhlB.

The protein resides in the cytoplasm. Its function is as follows. Globally modulates RNA abundance by binding to RNase E (Rne) and regulating its endonucleolytic activity. Can modulate Rne action in a substrate-dependent manner by altering the composition of the degradosome. Modulates RNA-binding and helicase activities of the degradosome. The protein is Regulator of ribonuclease activity A of Cronobacter sakazakii (strain ATCC BAA-894) (Enterobacter sakazakii).